The following is a 639-amino-acid chain: Developmental regulatory protein wetA (639 aa).

Disordered regions lie at residues 65-97 (MDPSHHHHHPHHHAHGESSTTSSGVSNADEFDF), 206-369 (TTMR…SAAS), 418-552 (GLLI…SADE), and 587-613 (LMTGVAPSGSSKTKARREKEAQERRRR). The span at 69 to 78 (HHHHHPHHHA) shows a compositional bias: basic residues. 2 stretches are compositionally biased toward polar residues: residues 81-90 (ESSTTSSGVS) and 214-226 (VSQTLQRAVSPSM). Residues 246-255 (RGRRAHRAHT) show a composition bias toward basic residues. Low complexity-rich tracts occupy residues 256–275 (QHALQHQQQQHQHQQQQAHQ), 346–369 (QQQWQQQQQQQHNGAQQHQWSAAS), and 506–526 (HSSGGSAASSSQRSASGRVSV).

This sequence belongs to the wetA family.

In terms of biological role, brlA, abaA and wetA are pivotal regulators of conidiophore development and conidium maturation. They act individually and together to regulate their own expression and that of numerous other sporulation-specific genes. Acts as a crucial regulator of both conidiation capacity and conidial quality. Plays a role in virulence. This is Developmental regulatory protein wetA from Beauveria bassiana (strain ARSEF 2860) (White muscardine disease fungus).